Consider the following 182-residue polypeptide: ATP-dependent protease subunit HslV (182 aa).

Thr-12 is an active-site residue. Ala-167, Cys-170, and Thr-173 together coordinate Na(+).

It belongs to the peptidase T1B family. HslV subfamily. In terms of assembly, a double ring-shaped homohexamer of HslV is capped on each side by a ring-shaped HslU homohexamer. The assembly of the HslU/HslV complex is dependent on binding of ATP.

It localises to the cytoplasm. It catalyses the reaction ATP-dependent cleavage of peptide bonds with broad specificity.. With respect to regulation, allosterically activated by HslU binding. In terms of biological role, protease subunit of a proteasome-like degradation complex believed to be a general protein degrading machinery. This Chlorobium luteolum (strain DSM 273 / BCRC 81028 / 2530) (Pelodictyon luteolum) protein is ATP-dependent protease subunit HslV.